Reading from the N-terminus, the 132-residue chain is MDVTRLLLATLLVFLCFFTAYSHLPPEEKLRDDRSLRSNSSVNLLDFPSVSIVALNKKSKQISRKEAEKKRSSKKEASMKKVARPRTPLSAPCVATRDSCKPPAPACCDPCASCQCRFFRSACSCRVLSLNC.

An N-terminal signal peptide occupies residues 1–22; sequence MDVTRLLLATLLVFLCFFTAYS. N-linked (GlcNAc...) asparagine glycosylation is present at Asn-39. The interval 62 to 88 is disordered; it reads ISRKEAEKKRSSKKEASMKKVARPRTP. Positions 63–79 are enriched in basic and acidic residues; that stretch reads SRKEAEKKRSSKKEASM. 5 cysteine pairs are disulfide-bonded: Cys-93/Cys-108, Cys-100/Cys-114, Cys-107/Cys-125, Cys-111/Cys-132, and Cys-116/Cys-123. Residues 93–132 enclose the Agouti domain; the sequence is CVATRDSCKPPAPACCDPCASCQCRFFRSACSCRVLSLNC.

The protein localises to the secreted. Involved in the regulation of melanogenesis. The binding of ASP to MC1R precludes alpha-MSH initiated signaling and thus blocks production of cAMP, leading to a down-regulation of eumelanogenesis (brown/black pigment) and thus increasing synthesis of pheomelanin (yellow/red pigment). The chain is Agouti-signaling protein (ASIP) from Chlorocebus aethiops (Green monkey).